The chain runs to 1066 residues: MKEISESYVPAVVENEVREYWKANNTYRETRKLHESGKPWLFVDGPPYTTGYIHLGTAWNKILKDAILRYHSMTGQHIIERAGYDMHGLPIEVKVEEKLGFKNKADIEKYGVAKFIEECREFALTHKDLMSEQFKDLGTWMDFDDPYQTVDKGYIEAAWYTLKRCEEEKMLERGSRVVNWCPRCGTAIADAEVEYWDETDPSIFVKFPIQGTENEYLVIWTTTPWTLPANVAVAVGEEFVYAKCRAVKDGKSEDLWIAKELAEQILKYGKYQDYSIIETKTGAELAGTKYISPLASAVPMQAQIEHRVVIADYVAMENTGMVHIAPGHGWDDYLVGLKENLPAVCPVDGNGNFTDEAGIFAGKYVKAPETNQEVIDVLGDAMLAVRKITHRYGHCWRCKTPIIYRATSQWFLKVKDIREKMLEEIADEVTWYPEWAGSARFHDWVEEARDWCISRQRYWGIPIPVWVCPVCNKYHVVGRYEELEQLSGQKMTDPHRPYVDDITIPCECGGTMKRIPDIFDVWYDSGIASWATLRFPEKPEDFGKYWPADFILEGHDQTRGWFYSQLALSTIAFGKAPYKSVLMHGFALDAEGKKMSKSLGNVIAPEDVAKQFGVDVMRQYILSANAPWDDMRFSLEGVKTNHRMFNVLWNVYKFPLPYMALDGYKPAAKDGVWDPSAVEDHISEFCREDRWLISRVNSLAEQVTKEMEVCNLHRATRPISTFILDELSRWYVQLVRPRMWLEEESVSKMQAYDTMYYVMRRLVTIFAPFAPHITECMYQNLRCEGDLPSVHMVDWFSGNDALRDPVLEEEMEIVQEFDEAVANARQNGKRKGRWPVGTVVVATDSEKVAGAVSAMNDMCCDRANARTVTVVKGVWDKLDWTAVPVMKVIGKQFGRDGPKVKAFIEEANGTKLKALLTADGKVSMEKDGFTAELTEEHMTFEEKMPENIFSSPMENGTIYVDVTLTPELEAEGYSREVIRRIQEMRKQAGLAVDAKIKAEVVIDDARVMPLVDSKHDVIETEVRANCLKIRVPDGETCSCRVADEAILAMDWEIDDLKVRISISKAE.

Positions 47–57 match the 'HIGH' region motif; it reads PYTTGYIHLGT. A 'KMSKS' region motif is present at residues 594–598; it reads KMSKS. Lys597 is an ATP binding site.

The protein belongs to the class-I aminoacyl-tRNA synthetase family. IleS type 2 subfamily. As to quaternary structure, monomer. Zn(2+) is required as a cofactor.

It localises to the cytoplasm. It catalyses the reaction tRNA(Ile) + L-isoleucine + ATP = L-isoleucyl-tRNA(Ile) + AMP + diphosphate. In terms of biological role, catalyzes the attachment of isoleucine to tRNA(Ile). As IleRS can inadvertently accommodate and process structurally similar amino acids such as valine, to avoid such errors it has two additional distinct tRNA(Ile)-dependent editing activities. One activity is designated as 'pretransfer' editing and involves the hydrolysis of activated Val-AMP. The other activity is designated 'posttransfer' editing and involves deacylation of mischarged Val-tRNA(Ile). The polypeptide is Isoleucine--tRNA ligase (Methanocorpusculum labreanum (strain ATCC 43576 / DSM 4855 / Z)).